Reading from the N-terminus, the 68-residue chain is Conotoxin Mr3.3 (68 aa).

The N-terminal stretch at 1–19 is a signal peptide; that stretch reads MSRLGVLLTICLLLFPLTA. A propeptide spanning residues 20-51 is cleaved from the precursor; it reads VPLDGDQPADRPAERLQDDISSEHHPHFDSGR. Residues 22-46 form a disordered region; sequence LDGDQPADRPAERLQDDISSEHHPH. Residues 27–46 are compositionally biased toward basic and acidic residues; the sequence is PADRPAERLQDDISSEHHPH. 3 disulfide bridges follow: cysteine 53-cysteine 67, cysteine 54-cysteine 63, and cysteine 59-cysteine 66. A 4-hydroxyproline modification is found at proline 65.

It belongs to the conotoxin M superfamily. Expressed by the venom duct.

The protein localises to the secreted. The protein is Conotoxin Mr3.3 of Conus marmoreus (Marble cone).